Consider the following 424-residue polypeptide: MSNYYYYYGGGRYDWLKTVEPTNFLKIGLPYQAHPLHLQHQTTTPPSILEKFKRADILLNEVKAEMDPLMLQPETEKKLFQILSSIDMFKGLRKKVEFTYNAQIVTNAWLKMYELLNTMNFNNTSQAFCNCELPGGFISAINHFNYTMMHYPTFNWVASSLYPSSETDALEDHYGLYQCNPDNWLMQSPLLKKNMDYNNGDVTIASNVKNLALRATQRLTPIHLYTADGGINVGHDYNKQEELNLKLHFGQALTGLLSLSKGGNMILKHYTLNHAFTLSLICVFSHFFEELYITKPTSSRPTNSETYIVGKNRLRLFTPKEEQVLLKRLEFFNDTPLVDLSLYQNLLESVYFAVETIHLKQQIEFLNFGMKCYRHFYNKIKLLNDYLAPKKKIFQDRWRVLNKLYVLEKKHKLKLCAASQGSVA.

Residues 103-315 (QIVTNAWLKM…TYIVGKNRLR (213 aa)) enclose the Adrift-type SAM-dependent 2'-O-MTase domain. S-adenosyl-L-methionine contacts are provided by G135 and D228. The active-site Proton acceptor is the K268.

It is found in the virion. This Ornithodoros (relapsing fever ticks) protein is Probable methyltransferase EP424R.